Reading from the N-terminus, the 280-residue chain is BURP domain protein USPL1 (280 aa).

An N-terminal signal peptide occupies residues Met1–Ala24. One can recognise a BURP domain in the interval Tyr58–Lys280.

As to expression, expressed in cotyledons, radicle, floral buds, open flowers, roots and developing seeds, but not in leaves. Highly expressed in the root tips. Detected in young leaves, hypocotyls, stems and mature seed funiculum.

Its subcellular location is the protein storage vacuole. It localises to the golgi apparatus. The protein resides in the golgi stack. The protein localises to the trans-Golgi network. It is found in the prevacuolar compartment. Associated with the protein storage vacuole formation. In Arabidopsis thaliana (Mouse-ear cress), this protein is BURP domain protein USPL1.